A 32-amino-acid polypeptide reads, in one-letter code: Hemocyanin C chain (32 aa).

It belongs to the tyrosinase family. Hemocyanin subfamily. Hemolymph.

The protein resides in the secreted. It is found in the extracellular space. In terms of biological role, hemocyanins are copper-containing oxygen carriers occurring freely dissolved in the hemolymph of many mollusks and arthropods. This is Hemocyanin C chain from Cherax destructor (Common yabby crayfish).